The following is a 466-amino-acid chain: Soluble pyridine nucleotide transhydrogenase (466 aa).

FAD is bound at residue 36-45 (ERYHNIGGGC).

Belongs to the class-I pyridine nucleotide-disulfide oxidoreductase family. The cofactor is FAD.

It is found in the cytoplasm. It carries out the reaction NAD(+) + NADPH = NADH + NADP(+). Its function is as follows. Conversion of NADPH, generated by peripheral catabolic pathways, to NADH, which can enter the respiratory chain for energy generation. This Erwinia tasmaniensis (strain DSM 17950 / CFBP 7177 / CIP 109463 / NCPPB 4357 / Et1/99) protein is Soluble pyridine nucleotide transhydrogenase.